We begin with the raw amino-acid sequence, 313 residues long: Pseudouridine-5'-phosphate glycosidase (313 aa).

Residue Glu26 is the Proton donor of the active site. Substrate-binding residues include Lys87 and Ala107. Asp139 contacts Mn(2+). Residue 141–143 participates in substrate binding; the sequence is SAD. Lys160 acts as the Nucleophile in catalysis.

It belongs to the pseudouridine-5'-phosphate glycosidase family. Homotrimer. Mn(2+) is required as a cofactor.

The catalysed reaction is D-ribose 5-phosphate + uracil = psi-UMP + H2O. Catalyzes the reversible cleavage of pseudouridine 5'-phosphate (PsiMP) to ribose 5-phosphate and uracil. Functions biologically in the cleavage direction, as part of a pseudouridine degradation pathway. The chain is Pseudouridine-5'-phosphate glycosidase from Corynebacterium aurimucosum (strain ATCC 700975 / DSM 44827 / CIP 107346 / CN-1) (Corynebacterium nigricans).